A 406-amino-acid polypeptide reads, in one-letter code: 8-amino-7-oxononanoate synthase (406 aa).

Residue Arg20 participates in substrate binding. 116 to 117 (GY) contributes to the pyridoxal 5'-phosphate binding site. His141 contributes to the substrate binding site. Residues Ser187, His215, and Thr243 each coordinate pyridoxal 5'-phosphate. Lys246 carries the post-translational modification N6-(pyridoxal phosphate)lysine. Thr366 serves as a coordination point for substrate.

This sequence belongs to the class-II pyridoxal-phosphate-dependent aminotransferase family. BioF subfamily. Homodimer. It depends on pyridoxal 5'-phosphate as a cofactor.

The catalysed reaction is 6-carboxyhexanoyl-[ACP] + L-alanine + H(+) = (8S)-8-amino-7-oxononanoate + holo-[ACP] + CO2. The protein operates within cofactor biosynthesis; biotin biosynthesis. Catalyzes the decarboxylative condensation of pimeloyl-[acyl-carrier protein] and L-alanine to produce 8-amino-7-oxononanoate (AON), [acyl-carrier protein], and carbon dioxide. The protein is 8-amino-7-oxononanoate synthase of Cupriavidus metallidurans (strain ATCC 43123 / DSM 2839 / NBRC 102507 / CH34) (Ralstonia metallidurans).